Here is a 305-residue protein sequence, read N- to C-terminus: 4-diphosphocytidyl-2-C-methyl-D-erythritol kinase (305 aa).

K15 is an active-site residue. Position 99 to 109 (99 to 109 (PMGGGIGGGSS)) interacts with ATP. The active site involves D141.

Belongs to the GHMP kinase family. IspE subfamily.

The enzyme catalyses 4-CDP-2-C-methyl-D-erythritol + ATP = 4-CDP-2-C-methyl-D-erythritol 2-phosphate + ADP + H(+). It functions in the pathway isoprenoid biosynthesis; isopentenyl diphosphate biosynthesis via DXP pathway; isopentenyl diphosphate from 1-deoxy-D-xylulose 5-phosphate: step 3/6. Functionally, catalyzes the phosphorylation of the position 2 hydroxy group of 4-diphosphocytidyl-2C-methyl-D-erythritol. The protein is 4-diphosphocytidyl-2-C-methyl-D-erythritol kinase of Marinomonas sp. (strain MWYL1).